The primary structure comprises 165 residues: Putative tyrosine-protein phosphatase AMV078 (165 aa).

A Tyrosine-protein phosphatase domain is found at 2-149 (NISNINNDIY…LKFYNSYKNI (148 aa)). The active-site Phosphocysteine intermediate is cysteine 94.

The protein belongs to the protein-tyrosine phosphatase family. Non-receptor class dual specificity subfamily.

It carries out the reaction O-phospho-L-tyrosyl-[protein] + H2O = L-tyrosyl-[protein] + phosphate. In Amsacta moorei entomopoxvirus (AmEPV), this protein is Putative tyrosine-protein phosphatase AMV078.